We begin with the raw amino-acid sequence, 371 residues long: Protein NDRG2 (371 aa).

The disordered stretch occupies residues 1 to 21 (MAELQEVQITEEKPLLPGQTP). Residue Ala2 is modified to N-acetylalanine. Residue Thr20 is modified to Phosphothreonine. Phosphoserine occurs at positions 326 and 328. Thr330 carries the post-translational modification Phosphothreonine. Ser332 bears the Phosphoserine mark. The residue at position 334 (Thr334) is a Phosphothreonine. The segment at 334–371 (TSAASVDGNRSRSRTLSQSSESGTLSSGPPGHTMEVSC) is disordered. Phosphoserine occurs at positions 335, 338, and 344. A compositionally biased stretch (low complexity) spans 347-361 (RTLSQSSESGTLSSG). Phosphothreonine is present on Thr348. A phosphoserine mark is found at Ser350, Ser352, Ser353, and Ser355. At Thr357 the chain carries Phosphothreonine. Position 370 is a phosphoserine (Ser370).

The protein belongs to the NDRG family. Interacts with CTNNB1. In terms of tissue distribution, highly expressed in brain, heart, skeletal muscle and salivary gland, and moderately in kidney and liver. Expressed in dendritic cells, but not in other blood cells. Expression levels are low in pancreatic and liver cancer tissues; absent in meningioma. Expressed in low-grade gliomas but present at low levels in glioblastoma. Isoform 1 and isoform 2 are present in brain neurons and up-regulated in Alzheimer disease (at protein level).

Its subcellular location is the cytoplasm. The protein resides in the perinuclear region. The protein localises to the cell projection. It is found in the growth cone. In terms of biological role, contributes to the regulation of the Wnt signaling pathway. Down-regulates CTNNB1-mediated transcriptional activation of target genes, such as CCND1, and may thereby act as tumor suppressor. May be involved in dendritic cell and neuron differentiation. This chain is Protein NDRG2 (NDRG2), found in Homo sapiens (Human).